We begin with the raw amino-acid sequence, 336 residues long: Ethanol acetyltransferase 1 (336 aa).

The transit peptide at 1 to 14 (MFPTRVLRSTLQKL) directs the protein to the mitochondrion. The 253-residue stretch at 44-296 (PIVFLHGIFG…VNSSHDILDQ (253 aa)) folds into the AB hydrolase-1 domain. Catalysis depends on charge relay system residues serine 117, aspartate 141, and histidine 291.

This sequence belongs to the AB hydrolase superfamily.

It is found in the mitochondrion. It carries out the reaction ethanol + acetyl-CoA = ethyl acetate + CoA. It catalyses the reaction acetyl-CoA + H2O = acetate + CoA + H(+). The enzyme catalyses ethyl acetate + H2O = ethanol + acetate + H(+). Functionally, alcohol acetyltransferase that catalyzes the synthesis of ethyl acetate from ethanol and acetyl-CoA. Can also function as a thioesterase by hydrolyzing acetyl-CoA in the absence of ethanol, as well as esterase hydrolyzing ethyl acetate. This chain is Ethanol acetyltransferase 1 (EAT1), found in Cyberlindnera jadinii (strain ATCC 18201 / CBS 1600 / BCRC 20928 / JCM 3617 / NBRC 0987 / NRRL Y-1542) (Torula yeast).